The primary structure comprises 34 residues: Endoglucanase 1 (34 aa).

It carries out the reaction Endohydrolysis of (1-&gt;4)-beta-D-glucosidic linkages in cellulose, lichenin and cereal beta-D-glucans.. This is Endoglucanase 1 from Sclerotinia sclerotiorum (White mold).